Consider the following 206-residue polypeptide: Outer-membrane lipoprotein LolB (206 aa).

An N-terminal signal peptide occupies residues 1–18; the sequence is MKTFKFFTALFATAILTA. The N-palmitoyl cysteine moiety is linked to residue cysteine 19. Residue cysteine 19 is the site of S-diacylglycerol cysteine attachment.

It belongs to the LolB family. As to quaternary structure, monomer.

It localises to the cell outer membrane. In terms of biological role, plays a critical role in the incorporation of lipoproteins in the outer membrane after they are released by the LolA protein. The protein is Outer-membrane lipoprotein LolB of Haemophilus influenzae (strain PittGG).